The primary structure comprises 911 residues: MSRFFTTGSDSESESSLSGEELVTKPVSGNYGKQPLLLSEDEEDTKRVVRSAKDKRFEELTNLIRTIRNAMKIRDVTKCLEEFELLGKAYGKAKSIVDKEGVPRFYIRILADLEDYLNELWEDKEGKKKMNKNNAKALSTLRQKIRKYNRDFESHITNYKQNPEQSADEDAEKNEEDSEGSSDEDEDEDGVGNTTFLKKKQESSGESRKFHKKMEDDDEDSEDSEDEEWDTSSTSSDSDSEEEEGKQTVLASKFLKKAPTTEEDKKAAEKKREDKAKKKHDRKSKRLDEEEEDNEGGEWERVRGGVPLVKEKPKMFAKGTEITHAVVIKKLNEILQVRGKKGTDRATQIELLQLLVQIAAENNLGVGVIVKIKFNIIASLYDYNPNLATYMKPEMWQMCLDCINELMDTLVAHSNIFVGENILEESENLHNFDQPLRVRGCILTLVERMDEEFTKIMQNTDPHSQEYVEHLKDEAQVCAIIERVQRYLEEKGTTEEICQIYLRRILHTYYKFDYKAHQRQLTPPEGSSKSEQDQAENEGEDSAVLMERLCKYIYAKDRTDRIRTCAILCHIYHHALHSRWYQARDLMLMSHLQDNIQHADPPVQILYNRTMVQLGICAFRQGLTKDAHNALLDIQSSGRAKELLGQGLLLRSLQERNQEQEKVERRRQVPFHLHINLELLECVYLVSAMLLEIPYMAAHESDARRRMISKQFHHQLRVGERQPLLGPPESMREHVVAASKAMKMGDWKTCHSFIINEKMNGKVWDLFPEADKVRTMLVRKIQEESLRTYLFTYSSVYDSISMETLSDMFELDLPTVHSIISKMIINEELMASLDQPTQTVVMHRTEPTAQQNLALQLAEKLGSLVENNERVFDHKQGTYGGYFRDQKDGYRKNEGYMRRGGYRQQQSQTAY.

The disordered stretch occupies residues 1 to 44 (MSRFFTTGSDSESESSLSGEELVTKPVSGNYGKQPLLLSEDEED). A compositionally biased stretch (low complexity) spans 8 to 21 (GSDSESESSLSGEE). Residues serine 9, serine 11, serine 13, serine 15, serine 16, serine 18, and serine 39 each carry the phosphoserine modification. Lysine 99 carries the N6-acetyllysine modification. Disordered regions lie at residues 157–299 (TNYK…GGEW) and 520–540 (QLTP…NEGE). Phosphoserine occurs at positions 166, 178, 181, and 182. Residues 166-190 (SADEDAEKNEEDSEGSSDEDEDEDG) show a composition bias toward acidic residues. Basic and acidic residues predominate over residues 199–208 (KKQESSGESR). Residues 216 to 230 (DDDEDSEDSEDEEWD) show a composition bias toward acidic residues. Over residues 259–276 (PTTEEDKKAAEKKREDKA) the composition is skewed to basic and acidic residues. Polar residues predominate over residues 520-529 (QLTPPEGSSK). Threonine 522 is modified (phosphothreonine). Lysine 641 carries the post-translational modification N6-acetyllysine. The PCI domain maps to 671-847 (FHLHINLELL…QTVVMHRTEP (177 aa)). The segment at 883–911 (FRDQKDGYRKNEGYMRRGGYRQQQSQTAY) is disordered. Residues 884–897 (RDQKDGYRKNEGYM) are compositionally biased toward basic and acidic residues. Serine 907 carries the post-translational modification Phosphoserine.

Belongs to the eIF-3 subunit C family. Component of the eukaryotic translation initiation factor 3 (eIF-3) complex, which is composed of 13 subunits: EIF3A, EIF3B, EIF3C, EIF3D, EIF3E, EIF3F, EIF3G, EIF3H, EIF3I, EIF3J, EIF3K, EIF3L and EIF3M. The eIF-3 complex appears to include 3 stable modules: module A is composed of EIF3A, EIF3B, EIF3G and EIF3I; module B is composed of EIF3F, EIF3H, and EIF3M; and module C is composed of EIF3C, EIF3D, EIF3E, EIF3K and EIF3L. EIF3C of module C binds EIF3B of module A and EIF3H of module B, thereby linking the three modules. EIF3J is a labile subunit that binds to the eIF-3 complex via EIF3B. The eIF-3 complex may interact with RPS6KB1 under conditions of nutrient depletion. Mitogenic stimulation may lead to binding and activation of a complex composed of MTOR and RPTOR, leading to phosphorylation and release of RPS6KB1 and binding of EIF4B to eIF-3. Interacts with ALKBH4, IFIT1 and IFIT2. Interacts with BZW2/5MP1. Phosphorylated. Phosphorylation is enhanced upon serum stimulation.

It is found in the cytoplasm. Its function is as follows. Component of the eukaryotic translation initiation factor 3 (eIF-3) complex, which is required for several steps in the initiation of protein synthesis. The eIF-3 complex associates with the 40S ribosome and facilitates the recruitment of eIF-1, eIF-1A, eIF-2:GTP:methionyl-tRNAi and eIF-5 to form the 43S pre-initiation complex (43S PIC). The eIF-3 complex stimulates mRNA recruitment to the 43S PIC and scanning of the mRNA for AUG recognition. The eIF-3 complex is also required for disassembly and recycling of post-termination ribosomal complexes and subsequently prevents premature joining of the 40S and 60S ribosomal subunits prior to initiation. The eIF-3 complex specifically targets and initiates translation of a subset of mRNAs involved in cell proliferation, including cell cycling, differentiation and apoptosis, and uses different modes of RNA stem-loop binding to exert either translational activation or repression. The polypeptide is Eukaryotic translation initiation factor 3 subunit C (Eif3c) (Mus musculus (Mouse)).